The chain runs to 216 residues: L-fuculose phosphate aldolase (216 aa).

Substrate contacts are provided by residues 28–29, 43–44, and 71–72; these read GN, TG, and SS. Glu73 acts as the Proton donor/acceptor in catalysis. 4 residues coordinate Zn(2+): Glu73, His92, His94, and His155.

This sequence belongs to the aldolase class II family. AraD/FucA subfamily. As to quaternary structure, homotetramer. Zn(2+) serves as cofactor.

It carries out the reaction L-fuculose 1-phosphate = (S)-lactaldehyde + dihydroxyacetone phosphate. It participates in carbohydrate degradation; L-fucose degradation; L-lactaldehyde and glycerone phosphate from L-fucose: step 3/3. Its function is as follows. Involved in the degradation of L-fucose and D-arabinose. Catalyzes the reversible cleavage of L-fuculose 1-phosphate (Fuc1P) to yield dihydroxyacetone phosphate (DHAP) and L-lactaldehyde. This Haemophilus influenzae (strain ATCC 51907 / DSM 11121 / KW20 / Rd) protein is L-fuculose phosphate aldolase.